The chain runs to 336 residues: Glyceraldehyde-3-phosphate dehydrogenase (336 aa).

Residues 12–13, aspartate 34, and methionine 79 contribute to the NAD(+) site; that span reads RI. D-glyceraldehyde 3-phosphate contacts are provided by residues 150–152, threonine 181, 210–211, and arginine 233; these read SCT and TG. Cysteine 151 functions as the Nucleophile in the catalytic mechanism. Residue asparagine 316 participates in NAD(+) binding.

The protein belongs to the glyceraldehyde-3-phosphate dehydrogenase family. In terms of assembly, homotetramer.

The protein resides in the cytoplasm. It carries out the reaction D-glyceraldehyde 3-phosphate + phosphate + NAD(+) = (2R)-3-phospho-glyceroyl phosphate + NADH + H(+). It functions in the pathway carbohydrate degradation; glycolysis; pyruvate from D-glyceraldehyde 3-phosphate: step 1/5. This is Glyceraldehyde-3-phosphate dehydrogenase from Echinococcus multilocularis (Fox tapeworm).